Consider the following 1102-residue polypeptide: Putative helicase/primase complex protein (1102 aa).

Disordered stretches follow at residues 1031–1057 and 1082–1102; these read TKEE…EETC and EETC…FTET.

This sequence belongs to the asfivirus F1055L family.

In terms of biological role, may be involved in DNA replication. The polypeptide is Putative helicase/primase complex protein (African swine fever virus (isolate Tick/Malawi/Lil 20-1/1983) (ASFV)).